A 156-amino-acid polypeptide reads, in one-letter code: Small ribosomal subunit protein uS7 (156 aa).

The protein belongs to the universal ribosomal protein uS7 family. In terms of assembly, part of the 30S ribosomal subunit. Contacts proteins S9 and S11.

One of the primary rRNA binding proteins, it binds directly to 16S rRNA where it nucleates assembly of the head domain of the 30S subunit. Is located at the subunit interface close to the decoding center, probably blocks exit of the E-site tRNA. This Mycobacterium sp. (strain JLS) protein is Small ribosomal subunit protein uS7.